The sequence spans 163 residues: Nucleotide-binding protein YPDSF_2805 (163 aa).

The protein belongs to the YajQ family.

Its function is as follows. Nucleotide-binding protein. In Yersinia pestis (strain Pestoides F), this protein is Nucleotide-binding protein YPDSF_2805.